Consider the following 180-residue polypeptide: Acireductone dioxygenase (180 aa).

Positions 97, 99, 103, and 141 each coordinate Fe(2+). The Ni(2+) site is built by His-97, His-99, Glu-103, and His-141.

This sequence belongs to the acireductone dioxygenase (ARD) family. As to quaternary structure, monomer. Requires Fe(2+) as cofactor. Ni(2+) serves as cofactor.

It carries out the reaction 1,2-dihydroxy-5-(methylsulfanyl)pent-1-en-3-one + O2 = 3-(methylsulfanyl)propanoate + CO + formate + 2 H(+). The enzyme catalyses 1,2-dihydroxy-5-(methylsulfanyl)pent-1-en-3-one + O2 = 4-methylsulfanyl-2-oxobutanoate + formate + 2 H(+). The protein operates within amino-acid biosynthesis; L-methionine biosynthesis via salvage pathway; L-methionine from S-methyl-5-thio-alpha-D-ribose 1-phosphate: step 5/6. Its function is as follows. Catalyzes 2 different reactions between oxygen and the acireductone 1,2-dihydroxy-3-keto-5-methylthiopentene (DHK-MTPene) depending upon the metal bound in the active site. Fe-containing acireductone dioxygenase (Fe-ARD) produces formate and 2-keto-4-methylthiobutyrate (KMTB), the alpha-ketoacid precursor of methionine in the methionine recycle pathway. Ni-containing acireductone dioxygenase (Ni-ARD) produces methylthiopropionate, carbon monoxide and formate, and does not lie on the methionine recycle pathway. This chain is Acireductone dioxygenase, found in Yersinia pseudotuberculosis serotype O:3 (strain YPIII).